The sequence spans 327 residues: GPI-linked NAD(P)(+)--arginine ADP-ribosyltransferase 1 (327 aa).

Residues 1–22 (MQMPAMMSLLLVSVGLMEALQA) form the signal peptide. 2 cysteine pairs are disulfide-bonded: cysteine 53–cysteine 277 and cysteine 174–cysteine 224. N-linked (GlcNAc...) asparagine glycosylation occurs at asparagine 65. The 201-residue stretch at 73–273 (QVYADSWTLA…IYLRALGKHS (201 aa)) folds into the TR mART core domain. NAD(+) contacts are provided by tyrosine 121 and arginine 179. Residues arginine 179 and serine 202 contribute to the active site. An NAD(+)-binding site is contributed by serine 233. The active site involves glutamate 240. An N-linked (GlcNAc...) asparagine glycan is attached at asparagine 253. Serine 295 carries GPI-anchor amidated serine lipidation. Positions 296–327 (AMGQSPLSAVWSLLLLLWFLVVRAFPDGPGLL) are cleaved as a propeptide — removed in mature form.

The protein belongs to the Arg-specific ADP-ribosyltransferase family.

It localises to the sarcoplasmic reticulum membrane. The enzyme catalyses L-arginyl-[protein] + NAD(+) = N(omega)-(ADP-D-ribosyl)-L-arginyl-[protein] + nicotinamide + H(+). In terms of biological role, has ADP-ribosyltransferase activity toward GLP1R. The sequence is that of GPI-linked NAD(P)(+)--arginine ADP-ribosyltransferase 1 (ART1) from Homo sapiens (Human).